The sequence spans 278 residues: MKSILQQPIWRYYDQSISAKQRSPLESFATDDTLCQLVGQLVSPPTIRTWVHEASVVLGIQDHRLPYVQQGMDLLESRGYQPIVRNSGGLAVVLDEGILNISIVLSEQMDSLSINDGYDVMVDLVKGLFPEVAEKIEAYEIVGSYCPGSYDLSIEGKKFAGISQRRLRQGVAVQIYLCIEGSGSQRAALIRDFYEESLQQEETKFNYPQIVPEVMASLSELVDLHLTVEGVVIRLQQLLHRLAGEVHPESFHDEELTLYGFYLKRVFERNAKMLERHE.

The 207-residue stretch at 41-247 folds into the BPL/LPL catalytic domain; sequence LVSPPTIRTW…LLHRLAGEVH (207 aa). The active-site Acyl-thioester intermediate is Cys-146.

This sequence belongs to the octanoyltransferase LipL family.

It carries out the reaction N(6)-octanoyl-L-lysyl-[glycine-cleavage complex H protein] + L-lysyl-[lipoyl-carrier protein] = N(6)-octanoyl-L-lysyl-[lipoyl-carrier protein] + L-lysyl-[glycine-cleavage complex H protein]. It functions in the pathway protein modification; protein lipoylation via endogenous pathway; protein N(6)-(lipoyl)lysine from octanoyl-[acyl-carrier-protein]. Catalyzes the amidotransfer (transamidation) of the octanoyl moiety from octanoyl-GcvH to the lipoyl domain of the E2 subunit of lipoate-dependent enzymes. This is Octanoyl-[GcvH]:protein N-octanoyltransferase from Lysinibacillus sphaericus (strain C3-41).